We begin with the raw amino-acid sequence, 266 residues long: 3-methyl-2-oxobutanoate hydroxymethyltransferase (266 aa).

Mg(2+) is bound by residues Asp45 and Asp84. Residues 45 to 46, Asp84, and Lys112 each bind 3-methyl-2-oxobutanoate; that span reads DS. Glu114 contacts Mg(2+). Glu181 acts as the Proton acceptor in catalysis.

Belongs to the PanB family. In terms of assembly, homodecamer; pentamer of dimers. Mg(2+) serves as cofactor.

It is found in the cytoplasm. The enzyme catalyses 3-methyl-2-oxobutanoate + (6R)-5,10-methylene-5,6,7,8-tetrahydrofolate + H2O = 2-dehydropantoate + (6S)-5,6,7,8-tetrahydrofolate. It participates in cofactor biosynthesis; (R)-pantothenate biosynthesis; (R)-pantoate from 3-methyl-2-oxobutanoate: step 1/2. In terms of biological role, catalyzes the reversible reaction in which hydroxymethyl group from 5,10-methylenetetrahydrofolate is transferred onto alpha-ketoisovalerate to form ketopantoate. The chain is 3-methyl-2-oxobutanoate hydroxymethyltransferase from Pseudomonas savastanoi pv. phaseolicola (strain 1448A / Race 6) (Pseudomonas syringae pv. phaseolicola (strain 1448A / Race 6)).